A 272-amino-acid chain; its full sequence is Shikimate dehydrogenase (NADP(+)) (272 aa).

Residues S14 to S16 and T61 contribute to the shikimate site. K65 functions as the Proton acceptor in the catalytic mechanism. E77 is an NADP(+) binding site. Positions 86 and 102 each coordinate shikimate. NADP(+) is bound by residues G126–A130, N149–K154, and M212. Y214 lines the shikimate pocket. G237 contributes to the NADP(+) binding site.

Belongs to the shikimate dehydrogenase family. As to quaternary structure, homodimer.

It carries out the reaction shikimate + NADP(+) = 3-dehydroshikimate + NADPH + H(+). It functions in the pathway metabolic intermediate biosynthesis; chorismate biosynthesis; chorismate from D-erythrose 4-phosphate and phosphoenolpyruvate: step 4/7. In terms of biological role, involved in the biosynthesis of the chorismate, which leads to the biosynthesis of aromatic amino acids. Catalyzes the reversible NADPH linked reduction of 3-dehydroshikimate (DHSA) to yield shikimate (SA). The chain is Shikimate dehydrogenase (NADP(+)) from Glaesserella parasuis serovar 5 (strain SH0165) (Haemophilus parasuis).